Reading from the N-terminus, the 106-residue chain is GDPVAPSVLLFPPSKEELTTGTATIVCVANKFYPSDITVTWKVDGTTQQSGIENSKTPQSPEDNTYSLSSTLSLTSAQYNSHSVYTCEVVQGSASPIVQSFNRGDC.

Residues 6-99 (PSVLLFPPSK…VQGSASPIVQ (94 aa)) enclose the Ig-like domain. Residues cysteine 27 and cysteine 87 are joined by a disulfide bond. Positions 48 to 64 (QQSGIENSKTPQSPEDN) are enriched in polar residues. A disordered region spans residues 48–67 (QQSGIENSKTPQSPEDNTYS).

The sequence is that of Ig kappa-b4 chain C region (K-BAS) from Oryctolagus cuniculus (Rabbit).